Reading from the N-terminus, the 975-residue chain is Glycine dehydrogenase (decarboxylating) (975 aa).

K702 bears the N6-(pyridoxal phosphate)lysine mark.

It belongs to the GcvP family. The glycine cleavage system is composed of four proteins: P, T, L and H. Requires pyridoxal 5'-phosphate as cofactor.

The catalysed reaction is N(6)-[(R)-lipoyl]-L-lysyl-[glycine-cleavage complex H protein] + glycine + H(+) = N(6)-[(R)-S(8)-aminomethyldihydrolipoyl]-L-lysyl-[glycine-cleavage complex H protein] + CO2. The glycine cleavage system catalyzes the degradation of glycine. The P protein binds the alpha-amino group of glycine through its pyridoxal phosphate cofactor; CO(2) is released and the remaining methylamine moiety is then transferred to the lipoamide cofactor of the H protein. The protein is Glycine dehydrogenase (decarboxylating) of Xanthomonas campestris pv. campestris (strain 8004).